A 373-amino-acid chain; its full sequence is GDSL esterase/lipase LIP-4 (373 aa).

The first 32 residues, 1–32, serve as a signal peptide directing secretion; the sequence is MATLFLYSNTFSFFFITLVSLALLILRQPSRA. Catalysis depends on serine 47, which acts as the Nucleophile. Asparagine 93 is a glycosylation site (N-linked (GlcNAc...) asparagine). Catalysis depends on residues aspartate 339 and histidine 342.

This sequence belongs to the 'GDSL' lipolytic enzyme family.

It localises to the secreted. In Arabidopsis thaliana (Mouse-ear cress), this protein is GDSL esterase/lipase LIP-4 (LIP4).